The sequence spans 225 residues: ATP-dependent Clp protease proteolytic subunit (225 aa).

The active-site Nucleophile is S123. H148 is a catalytic residue.

The protein belongs to the peptidase S14 family. In terms of assembly, fourteen ClpP subunits assemble into 2 heptameric rings which stack back to back to give a disk-like structure with a central cavity, resembling the structure of eukaryotic proteasomes.

Its subcellular location is the cytoplasm. It carries out the reaction Hydrolysis of proteins to small peptides in the presence of ATP and magnesium. alpha-casein is the usual test substrate. In the absence of ATP, only oligopeptides shorter than five residues are hydrolyzed (such as succinyl-Leu-Tyr-|-NHMec, and Leu-Tyr-Leu-|-Tyr-Trp, in which cleavage of the -Tyr-|-Leu- and -Tyr-|-Trp bonds also occurs).. Functionally, cleaves peptides in various proteins in a process that requires ATP hydrolysis. Has a chymotrypsin-like activity. Plays a major role in the degradation of misfolded proteins. This Chlorobium chlorochromatii (strain CaD3) protein is ATP-dependent Clp protease proteolytic subunit.